A 439-amino-acid polypeptide reads, in one-letter code: Ribosomal protein uS12 methylthiotransferase RimO (439 aa).

The 113-residue stretch at 2-114 (SKLYLMSLGC…IDEMILKKTN (113 aa)) folds into the MTTase N-terminal domain. The [4Fe-4S] cluster site is built by Cys-11, Cys-45, Cys-77, Cys-146, Cys-150, and Cys-153. The Radical SAM core domain maps to 132–363 (TGSNSHAFIK…VDEVIEKSFE (232 aa)).

It belongs to the methylthiotransferase family. RimO subfamily. It depends on [4Fe-4S] cluster as a cofactor.

Its subcellular location is the cytoplasm. The enzyme catalyses L-aspartate(89)-[ribosomal protein uS12]-hydrogen + (sulfur carrier)-SH + AH2 + 2 S-adenosyl-L-methionine = 3-methylsulfanyl-L-aspartate(89)-[ribosomal protein uS12]-hydrogen + (sulfur carrier)-H + 5'-deoxyadenosine + L-methionine + A + S-adenosyl-L-homocysteine + 2 H(+). Functionally, catalyzes the methylthiolation of an aspartic acid residue of ribosomal protein uS12. The chain is Ribosomal protein uS12 methylthiotransferase RimO from Campylobacter jejuni subsp. jejuni serotype O:6 (strain 81116 / NCTC 11828).